Here is a 277-residue protein sequence, read N- to C-terminus: Hematopoietically-expressed homeobox protein HHEX (277 aa).

2 disordered regions span residues 47–69 (AAPA…NSSF) and 199–277 (WRRL…SATR). Positions 52–63 (HSLPAPPPPTLP) are enriched in pro residues. The segment at residues 144 to 203 (RKGGQVRFSNEQTIELEKKFETQKYLSPPERKRLAKLLQLSERQVKTWFQNRRAKWRRLK) is a DNA-binding region (homeobox). Positions 210–226 (TKKEEAEGTGDHGDPRS) are enriched in basic and acidic residues. The span at 250-266 (EDPESDVSDDSDQEVDI) shows a compositional bias: acidic residues.

In terms of tissue distribution, in all hematopoietic tissues except peripheral blood erythrocytes and in the liver and lung.

The protein localises to the nucleus. Recognizes the DNA sequence 5'-ATTAA-3'. Transcriptional repressor. May play a role in hematopoietic differentiation. This chain is Hematopoietically-expressed homeobox protein HHEX (HHEX), found in Gallus gallus (Chicken).